Here is a 504-residue protein sequence, read N- to C-terminus: Galactan beta-1,4-galactosyltransferase GALS3 (504 aa).

A helical membrane pass occupies residues 30–50 (LTFMALLVLCTLATLLPFIPS). In terms of domain architecture, GT92 spans 242–456 (DYLYCGSSLY…YHGSISQRRE (215 aa)).

This sequence belongs to the glycosyltransferase 92 family. Expressed in root caps, mature leaves, top of the stems and seeds.

Its subcellular location is the golgi apparatus membrane. Functionally, involved in the biosynthesis of beta-1,4-galactan. Beta-1,4-galactans are abundant polysaccharides in plant cell walls and are found as side-chain of rhamnogalacturonan I, which is a major component of pectin. This is Galactan beta-1,4-galactosyltransferase GALS3 from Arabidopsis thaliana (Mouse-ear cress).